A 715-amino-acid polypeptide reads, in one-letter code: Probable phospholipase YOR022C, mitochondrial (715 aa).

The transit peptide at methionine 1–leucine 22 directs the protein to the mitochondrion. 3 disordered regions span residues tyrosine 161–glutamate 180, threonine 242–isoleucine 268, and tyrosine 311–arginine 340. The segment covering threonine 242–threonine 251 has biased composition (low complexity). The segment covering tyrosine 311–serine 324 has biased composition (polar residues). The active site involves serine 501. The DDHD domain maps to leucine 519 to serine 700.

Belongs to the PA-PLA1 family.

Its subcellular location is the mitochondrion. Probable phospholipase that hydrolyzes phosphatidic acid. The sequence is that of Probable phospholipase YOR022C, mitochondrial from Saccharomyces cerevisiae (strain ATCC 204508 / S288c) (Baker's yeast).